The sequence spans 523 residues: Succinate-semialdehyde dehydrogenase, mitochondrial (523 aa).

The N-terminal 35 residues, 1-35, are a transit peptide targeting the mitochondrion; the sequence is MATCFLLRNFCAARPALRPPGRLLREPAGAQRRSY. At K114 the chain carries N6-acetyllysine; alternate. An N6-succinyllysine; alternate modification is found at K114. Residues K123 and K172 each carry the N6-succinyllysine modification. NAD(+)-binding positions include R201 and 216-219; that span reads KPAE. R201 is a binding site for substrate. N6-acetyllysine; alternate is present on K253. At K253 the chain carries N6-succinyllysine; alternate. Position 272-277 (272-277) interacts with NAD(+); sequence GSTATG. The active-site Proton acceptor is the E294. R322 is a binding site for substrate. C328 (nucleophile) is an active-site residue. A disulfide bridge links C328 with C330. Position 353 is an N6-acetyllysine (K353). K390 carries the post-translational modification N6-succinyllysine. The residue at position 399 (K399) is an N6-acetyllysine. A substrate-binding site is contributed by S486. At S487 the chain carries Phosphoserine.

The protein belongs to the aldehyde dehydrogenase family. Homotetramer. As to expression, brain, pancreas, heart, liver, skeletal muscle, kidney. Lower in spleen, lung, kidney and testis.

The protein localises to the mitochondrion. It carries out the reaction succinate semialdehyde + NAD(+) + H2O = succinate + NADH + 2 H(+). Its pathway is amino-acid degradation; 4-aminobutanoate degradation. With respect to regulation, redox-regulated. Inhibited under oxydizing conditions. Catalyzes one step in the degradation of the inhibitory neurotransmitter gamma-aminobutyric acid (GABA). This is Succinate-semialdehyde dehydrogenase, mitochondrial (Aldh5a1) from Rattus norvegicus (Rat).